A 158-amino-acid chain; its full sequence is Snaclec flavocetin-A subunit alpha (158 aa).

An N-terminal signal peptide occupies residues 1 to 23; the sequence is MERLIFVSFGLLVVILSLSGTGA. Cystine bridges form between Cys-27-Cys-38, Cys-55-Cys-152, and Cys-127-Cys-144. In terms of domain architecture, C-type lectin spans 34 to 153; that stretch reads YDRYCYQAFS…CGTENPFVCK (120 aa).

This sequence belongs to the snaclec family. As to quaternary structure, tetramer of heterodimers of alpha and beta subunits (alphabeta)(4); disulfide-linked. In terms of tissue distribution, expressed by the venom gland.

It is found in the secreted. In terms of biological role, strong platelet aggregation inhibitor. Binds specifically to platelet glycoprotein Ibalpha (GP1BA) with high affinity and inhibits vWF-dependent platelet aggregation. Has also been observed to induce small agglutinates in washed platelets by binding to GPIb. This Protobothrops flavoviridis (Habu) protein is Snaclec flavocetin-A subunit alpha.